The primary structure comprises 340 residues: 4-amino-5-hydroxymethyl-2-methylpyrimidine phosphate synthase THI11 (340 aa).

Residue K62 is modified to N6-(pyridoxal phosphate)lysine. Residue H66 is part of the active site. 115 to 118 is a binding site for pyridoxal 5'-phosphate; the sequence is GEFG. The CCCFC; essential for catalytic activity, may be the site of iron coordination signature appears at 195-199; the sequence is CCCFC.

This sequence belongs to the NMT1/THI5 family. In terms of assembly, homodimer. The cofactor is Fe cation.

The catalysed reaction is N(6)-(pyridoxal phosphate)-L-lysyl-[4-amino-5-hydroxymethyl-2-methylpyrimidine phosphate synthase] + L-histidyl-[4-amino-5-hydroxymethyl-2-methylpyrimidine phosphate synthase] + 2 Fe(3+) + 4 H2O = L-lysyl-[4-amino-5-hydroxymethyl-2-methylpyrimidine phosphate synthase] + (2S)-2-amino-5-hydroxy-4-oxopentanoyl-[4-amino-5-hydroxymethyl-2-methylpyrimidine phosphate synthase] + 4-amino-2-methyl-5-(phosphooxymethyl)pyrimidine + 3-oxopropanoate + 2 Fe(2+) + 2 H(+). The protein operates within cofactor biosynthesis; thiamine diphosphate biosynthesis. Responsible for the formation of the pyrimidine heterocycle in the thiamine biosynthesis pathway. Catalyzes the formation of hydroxymethylpyrimidine phosphate (HMP-P) from histidine and pyridoxal phosphate (PLP). The protein uses PLP and the active site histidine to form HMP-P, generating an inactive enzyme. The enzyme can only undergo a single turnover, which suggests it is a suicide enzyme. The chain is 4-amino-5-hydroxymethyl-2-methylpyrimidine phosphate synthase THI11 from Saccharomyces cerevisiae (strain ATCC 204508 / S288c) (Baker's yeast).